Consider the following 380-residue polypeptide: Cytochrome b (380 aa).

Helical transmembrane passes span 34–54 (FGSL…LLAA), 78–99 (WLLR…YLHI), 114–134 (WNTG…GYVL), and 179–199 (FFAL…IHLT). Residues histidine 84 and histidine 98 each coordinate heme b. The heme b site is built by histidine 183 and histidine 197. Histidine 202 is an a ubiquinone binding site. A run of 4 helical transmembrane segments spans residues 227–247 (LKDI…ALFH), 289–309 (LGGV…PFLH), 321–341 (LSQL…WIGS), and 348–368 (FIII…VLFP).

This sequence belongs to the cytochrome b family. In terms of assembly, the cytochrome bc1 complex contains 11 subunits: 3 respiratory subunits (MT-CYB, CYC1 and UQCRFS1), 2 core proteins (UQCRC1 and UQCRC2) and 6 low-molecular weight proteins (UQCRH/QCR6, UQCRB/QCR7, UQCRQ/QCR8, UQCR10/QCR9, UQCR11/QCR10 and a cleavage product of UQCRFS1). This cytochrome bc1 complex then forms a dimer. The cofactor is heme b.

It localises to the mitochondrion inner membrane. Functionally, component of the ubiquinol-cytochrome c reductase complex (complex III or cytochrome b-c1 complex) that is part of the mitochondrial respiratory chain. The b-c1 complex mediates electron transfer from ubiquinol to cytochrome c. Contributes to the generation of a proton gradient across the mitochondrial membrane that is then used for ATP synthesis. The protein is Cytochrome b (MT-CYB) of Trogon curucui (Blue-crowned trogon).